We begin with the raw amino-acid sequence, 428 residues long: Serine--tRNA ligase (428 aa).

231 to 233 (TSE) lines the L-serine pocket. ATP-binding positions include 262 to 264 (RRE) and Val-278. An L-serine-binding site is contributed by Glu-285. 349–352 (ELTS) is an ATP binding site. Thr-384 is a binding site for L-serine.

It belongs to the class-II aminoacyl-tRNA synthetase family. Type-1 seryl-tRNA synthetase subfamily. As to quaternary structure, homodimer. The tRNA molecule binds across the dimer.

It is found in the cytoplasm. It carries out the reaction tRNA(Ser) + L-serine + ATP = L-seryl-tRNA(Ser) + AMP + diphosphate + H(+). The catalysed reaction is tRNA(Sec) + L-serine + ATP = L-seryl-tRNA(Sec) + AMP + diphosphate + H(+). Its pathway is aminoacyl-tRNA biosynthesis; selenocysteinyl-tRNA(Sec) biosynthesis; L-seryl-tRNA(Sec) from L-serine and tRNA(Sec): step 1/1. In terms of biological role, catalyzes the attachment of serine to tRNA(Ser). Is also able to aminoacylate tRNA(Sec) with serine, to form the misacylated tRNA L-seryl-tRNA(Sec), which will be further converted into selenocysteinyl-tRNA(Sec). In Bifidobacterium animalis subsp. lactis (strain AD011), this protein is Serine--tRNA ligase.